We begin with the raw amino-acid sequence, 154 residues long: Actin-related protein 2/3 complex subunit 5 (154 aa).

Thr-142 bears the Phosphothreonine mark.

It belongs to the ARPC5 family. As to quaternary structure, component of the Arp2/3 complex composed of ARP2, ARP3, ARC40/p41-ARC, ARC35/p34-ARC, ARC18/p21-ARC, ARC19/p20-ARC and ARC16/p16-ARC.

Its subcellular location is the cytoplasm. The protein resides in the cytoskeleton. It localises to the actin patch. In terms of biological role, functions as a component of the Arp2/3 complex which is involved in regulation of actin polymerization and together with an activating nucleation-promoting factor (NPF) mediates the formation of branched actin networks. The protein is Actin-related protein 2/3 complex subunit 5 (ARC15) of Saccharomyces cerevisiae (strain ATCC 204508 / S288c) (Baker's yeast).